Reading from the N-terminus, the 149-residue chain is 3-dehydroquinate dehydratase (149 aa).

Y22 acts as the Proton acceptor in catalysis. Substrate contacts are provided by N73, H79, and D86. The active-site Proton donor is H99. Substrate-binding positions include 100-101 (LS) and R110.

It belongs to the type-II 3-dehydroquinase family. Homododecamer.

It carries out the reaction 3-dehydroquinate = 3-dehydroshikimate + H2O. It participates in metabolic intermediate biosynthesis; chorismate biosynthesis; chorismate from D-erythrose 4-phosphate and phosphoenolpyruvate: step 3/7. Catalyzes a trans-dehydration via an enolate intermediate. In Prochlorococcus marinus (strain MIT 9313), this protein is 3-dehydroquinate dehydratase.